The following is a 142-amino-acid chain: Transcriptional regulator MraZ (142 aa).

SpoVT-AbrB domains are found at residues 5 to 47 (EFTH…PLNE) and 76 to 119 (ATDC…SAER).

The protein belongs to the MraZ family. As to quaternary structure, forms oligomers.

The protein localises to the cytoplasm. Its subcellular location is the nucleoid. This Limosilactobacillus reuteri (strain DSM 20016) (Lactobacillus reuteri) protein is Transcriptional regulator MraZ.